Here is a 259-residue protein sequence, read N- to C-terminus: Global transcriptional regulator CodY (259 aa).

The interval 1 to 155 is GAF domain; that stretch reads MELLAKTRKL…SSTVVGMEIL (155 aa). The segment at residues 203 to 222 is a DNA-binding region (H-T-H motif); the sequence is ASKIADRVGITRSVIVNALR. Ser215 carries the post-translational modification Phosphoserine.

This sequence belongs to the CodY family.

Its subcellular location is the cytoplasm. Functionally, DNA-binding global transcriptional regulator which is involved in the adaptive response to starvation and acts by directly or indirectly controlling the expression of numerous genes in response to nutrient availability. During rapid exponential growth, CodY is highly active and represses genes whose products allow adaptation to nutrient depletion. In Bacillus mycoides (strain KBAB4) (Bacillus weihenstephanensis), this protein is Global transcriptional regulator CodY.